The sequence spans 151 residues: Large ribosomal subunit protein uL13 (151 aa).

This sequence belongs to the universal ribosomal protein uL13 family. Part of the 50S ribosomal subunit.

Functionally, this protein is one of the early assembly proteins of the 50S ribosomal subunit, although it is not seen to bind rRNA by itself. It is important during the early stages of 50S assembly. The chain is Large ribosomal subunit protein uL13 from Synechococcus sp. (strain JA-3-3Ab) (Cyanobacteria bacterium Yellowstone A-Prime).